The following is a 640-amino-acid chain: Threonine--tRNA ligase (640 aa).

Positions 1 to 59 constitute a TGS domain; that stretch reads MKIKVKLPDGKEKEYDRGITPAEIAKELGVKKAIGAVVNGELWDLKRPIENDCELRLVT. The segment at 240 to 531 is catalytic; the sequence is DHRKLGPHLE…LIEHFAGAFP (292 aa). 3 residues coordinate Zn(2+): Cys-332, His-383, and His-508.

The protein belongs to the class-II aminoacyl-tRNA synthetase family. As to quaternary structure, homodimer. Zn(2+) serves as cofactor.

It is found in the cytoplasm. It catalyses the reaction tRNA(Thr) + L-threonine + ATP = L-threonyl-tRNA(Thr) + AMP + diphosphate + H(+). Catalyzes the attachment of threonine to tRNA(Thr) in a two-step reaction: L-threonine is first activated by ATP to form Thr-AMP and then transferred to the acceptor end of tRNA(Thr). Also edits incorrectly charged L-seryl-tRNA(Thr). This Thermotoga sp. (strain RQ2) protein is Threonine--tRNA ligase.